The sequence spans 631 residues: RNA polymerase sigma factor RpoD (631 aa).

Residues 395–465 form a sigma-70 factor domain-2 region; sequence LIKANLRLVV…TRSISDQART (71 aa). The Interaction with polymerase core subunit RpoC motif lies at 419–422; sequence DLVQ. Positions 474 to 550 are sigma-70 factor domain-3; it reads EQINRLNRET…DKAIKNPANH (77 aa). A sigma-70 factor domain-4 region spans residues 563-616; the sequence is ILGTLPEREQEVVKMRFGLEDGYSLTLEEVGLHFNVTRERIRQIESKALRRLKN. A DNA-binding region (H-T-H motif) is located at residues 589–608; the sequence is LEEVGLHFNVTRERIRQIES.

Belongs to the sigma-70 factor family. RpoD/SigA subfamily. As to quaternary structure, interacts transiently with the RNA polymerase catalytic core.

Its subcellular location is the cytoplasm. Its function is as follows. Sigma factors are initiation factors that promote the attachment of RNA polymerase to specific initiation sites and are then released. This sigma factor is the primary sigma factor during exponential growth. This Borreliella burgdorferi (strain ATCC 35210 / DSM 4680 / CIP 102532 / B31) (Borrelia burgdorferi) protein is RNA polymerase sigma factor RpoD.